The primary structure comprises 523 residues: Siroheme synthase (523 aa).

The tract at residues 1–203 (MNTFPLFFKL…GNENEAIAQL (203 aa)) is precorrin-2 dehydrogenase /sirohydrochlorin ferrochelatase. Residues 22 to 23 (DV) and 43 to 44 (PS) each bind NAD(+). A Phosphoserine modification is found at S128. Residues 231-523 (GEVYIVGAGP…DGGLEQLVID (293 aa)) form a uroporphyrinogen-III C-methyltransferase region. P240 is an S-adenosyl-L-methionine binding site. D263 (proton acceptor) is an active-site residue. K285 functions as the Proton donor in the catalytic mechanism. S-adenosyl-L-methionine-binding positions include 316 to 318 (GGD), I321, 346 to 347 (TA), M398, and A427.

In the N-terminal section; belongs to the precorrin-2 dehydrogenase / sirohydrochlorin ferrochelatase family. The protein in the C-terminal section; belongs to the precorrin methyltransferase family.

The catalysed reaction is uroporphyrinogen III + 2 S-adenosyl-L-methionine = precorrin-2 + 2 S-adenosyl-L-homocysteine + H(+). It catalyses the reaction precorrin-2 + NAD(+) = sirohydrochlorin + NADH + 2 H(+). It carries out the reaction siroheme + 2 H(+) = sirohydrochlorin + Fe(2+). It functions in the pathway cofactor biosynthesis; adenosylcobalamin biosynthesis; precorrin-2 from uroporphyrinogen III: step 1/1. The protein operates within cofactor biosynthesis; adenosylcobalamin biosynthesis; sirohydrochlorin from precorrin-2: step 1/1. Its pathway is porphyrin-containing compound metabolism; siroheme biosynthesis; precorrin-2 from uroporphyrinogen III: step 1/1. It participates in porphyrin-containing compound metabolism; siroheme biosynthesis; siroheme from sirohydrochlorin: step 1/1. It functions in the pathway porphyrin-containing compound metabolism; siroheme biosynthesis; sirohydrochlorin from precorrin-2: step 1/1. Multifunctional enzyme that catalyzes the SAM-dependent methylations of uroporphyrinogen III at position C-2 and C-7 to form precorrin-2 via precorrin-1. Then it catalyzes the NAD-dependent ring dehydrogenation of precorrin-2 to yield sirohydrochlorin. Finally, it catalyzes the ferrochelation of sirohydrochlorin to yield siroheme. This chain is Siroheme synthase, found in Psychrobacter cryohalolentis (strain ATCC BAA-1226 / DSM 17306 / VKM B-2378 / K5).